Consider the following 808-residue polypeptide: Glycerol-3-phosphate acyltransferase (808 aa).

Residues 306–311 (HRSHMD) carry the HXXXXD motif motif.

This sequence belongs to the GPAT/DAPAT family.

It localises to the cell inner membrane. It catalyses the reaction sn-glycerol 3-phosphate + an acyl-CoA = a 1-acyl-sn-glycero-3-phosphate + CoA. It functions in the pathway phospholipid metabolism; CDP-diacylglycerol biosynthesis; CDP-diacylglycerol from sn-glycerol 3-phosphate: step 1/3. This chain is Glycerol-3-phosphate acyltransferase, found in Vibrio parahaemolyticus serotype O3:K6 (strain RIMD 2210633).